Here is a 471-residue protein sequence, read N- to C-terminus: UDP-glycosyltransferase 1 (471 aa).

Catalysis depends on His15, which acts as the Proton acceptor. His15 serves as a coordination point for an anthocyanidin. Residue Asp124 is the Charge relay of the active site. The UDP-alpha-D-glucose site is built by Thr146, Ala348, Gln350, His365, Trp368, Asn369, Ser370, and Glu373. Ala388 lines the an anthocyanidin pocket. 2 residues coordinate UDP-alpha-D-glucose: Glu389 and Gln390.

This sequence belongs to the UDP-glycosyltransferase family. In terms of tissue distribution, expressed in roots. Detected in stems and leaves.

It catalyses the reaction a 7-hydroxyisoflavone + UDP-alpha-D-glucose = a 7-hydroxyisoflavone 7-O-beta-D-glucoside + UDP + H(+). Isoflavone 7-O-glucosyltransferase converting daidzein to daidzin, genistein to genistin and formononetin to ononin. Shows some activity toward the chalcone isoliquiritigenin, the flavanones liquiritigenin and naringenin, and the flavone apigenin, but not toward cyanidin, luteolin, kaempferol, quercetin, daidzin and puerarin. The protein is UDP-glycosyltransferase 1 of Pueraria montana var. lobata (Kudzu vine).